Here is a 180-residue protein sequence, read N- to C-terminus: Large ribosomal subunit protein uL6 (180 aa).

Belongs to the universal ribosomal protein uL6 family. Part of the 50S ribosomal subunit.

In terms of biological role, this protein binds to the 23S rRNA, and is important in its secondary structure. It is located near the subunit interface in the base of the L7/L12 stalk, and near the tRNA binding site of the peptidyltransferase center. The polypeptide is Large ribosomal subunit protein uL6 (Clostridium botulinum (strain Langeland / NCTC 10281 / Type F)).